The primary structure comprises 285 residues: Tropomyosin-2 (285 aa).

A coiled-coil region spans residues 1 to 277; sequence MDAIKKKMQA…KDIGDDLDTA (277 aa). The segment at 103–133 is disordered; that stretch reads EERLATATAKLSEASQAADESERARKVLENR. Basic and acidic residues predominate over residues 122–133; that stretch reads ESERARKVLENR.

The protein belongs to the tropomyosin family. Homodimer.

Functionally, tropomyosin, in association with the troponin complex, plays a central role in the calcium dependent regulation of muscle contraction. This chain is Tropomyosin-2, found in Bombyx mori (Silk moth).